The chain runs to 469 residues: ATP synthase subunit beta (469 aa).

156-163 (GGAGVGKT) contributes to the ATP binding site.

The protein belongs to the ATPase alpha/beta chains family. As to quaternary structure, F-type ATPases have 2 components, CF(1) - the catalytic core - and CF(0) - the membrane proton channel. CF(1) has five subunits: alpha(3), beta(3), gamma(1), delta(1), epsilon(1). CF(0) has three main subunits: a(1), b(2) and c(9-12). The alpha and beta chains form an alternating ring which encloses part of the gamma chain. CF(1) is attached to CF(0) by a central stalk formed by the gamma and epsilon chains, while a peripheral stalk is formed by the delta and b chains.

Its subcellular location is the cell membrane. The enzyme catalyses ATP + H2O + 4 H(+)(in) = ADP + phosphate + 5 H(+)(out). Produces ATP from ADP in the presence of a proton gradient across the membrane. The catalytic sites are hosted primarily by the beta subunits. This Lactococcus lactis subsp. cremoris (strain SK11) protein is ATP synthase subunit beta.